A 231-amino-acid chain; its full sequence is Protein HHL1, chloroplastic (231 aa).

The transit peptide at 1 to 39 (MEVSMSLNALTRLPLKNTGRFEEVGLARHSLFSSRTACR) directs the protein to the chloroplast. Residues 93 to 113 (YLWYPLSIIAGGTTAKIMVAA) form a helical membrane-spanning segment. The disordered stretch occupies residues 206-231 (SFGKLSSLNPGSDEKTEETSDEKAKA). Positions 217-231 (SDEKTEETSDEKAKA) are enriched in basic and acidic residues.

Interacts with psbB, psbC and LQY1, but not with psbA or psbD.

It localises to the plastid. The protein localises to the chloroplast thylakoid membrane. Its function is as follows. Involved in photoprotection. Forms a complex with LQY1 that is involved in the repair and reassembly cycle of the PSII-LHCII supercomplex under high-light conditions. May function in guiding the release of psbC from PSII core monomers. In Arabidopsis thaliana (Mouse-ear cress), this protein is Protein HHL1, chloroplastic.